A 386-amino-acid chain; its full sequence is Putative membrane-bound transacylase BcsY (386 aa).

10 helical membrane passes run leucine 37 to valine 57, leucine 91 to leucine 111, isoleucine 118 to valine 138, leucine 156 to threonine 176, leucine 181 to glycine 201, alanine 237 to tyrosine 257, alanine 258 to proline 278, leucine 290 to valine 310, alanine 322 to valine 342, and alanine 362 to valine 382.

The protein belongs to the acyltransferase 3 family.

Its subcellular location is the cell inner membrane. It participates in glycan metabolism; bacterial cellulose biosynthesis. In terms of biological role, may acylate a glucose moiety into cellulose fibrils, in cooperation with BcsABII and BcsCII. The polypeptide is Putative membrane-bound transacylase BcsY (bcsY) (Komagataeibacter xylinus (Gluconacetobacter xylinus)).